The primary structure comprises 386 residues: Formate-dependent phosphoribosylglycinamide formyltransferase (386 aa).

N(1)-(5-phospho-beta-D-ribosyl)glycinamide-binding positions include 15–16 (EL) and E75. ATP-binding positions include R107, K148, 153-158 (SSGKGQ), 188-191 (EQFI), and E196. Residues 112–301 (ALAAQQLNLQ…EFELHLRAIV (190 aa)) form the ATP-grasp domain. Positions 260 and 272 each coordinate Mg(2+). N(1)-(5-phospho-beta-D-ribosyl)glycinamide-binding positions include D279, K349, and 356 to 357 (RR).

The protein belongs to the PurK/PurT family. In terms of assembly, homodimer.

The catalysed reaction is N(1)-(5-phospho-beta-D-ribosyl)glycinamide + formate + ATP = N(2)-formyl-N(1)-(5-phospho-beta-D-ribosyl)glycinamide + ADP + phosphate + H(+). The protein operates within purine metabolism; IMP biosynthesis via de novo pathway; N(2)-formyl-N(1)-(5-phospho-D-ribosyl)glycinamide from N(1)-(5-phospho-D-ribosyl)glycinamide (formate route): step 1/1. Functionally, involved in the de novo purine biosynthesis. Catalyzes the transfer of formate to 5-phospho-ribosyl-glycinamide (GAR), producing 5-phospho-ribosyl-N-formylglycinamide (FGAR). Formate is provided by PurU via hydrolysis of 10-formyl-tetrahydrofolate. The chain is Formate-dependent phosphoribosylglycinamide formyltransferase from Francisella tularensis subsp. tularensis (strain WY96-3418).